The primary structure comprises 397 residues: MSTLLNPYFGEFGGMYVPQILMPALRQLEEAFVSAQKDPAFQAEFTDLLKNYAGRPTALTKCRNLTEGTRTTLYLKREDLLHGGAHKTNQVLGQALLAKRMGKTEIIAETGAGQHGVASALASALLGLKCRIYMGAKDVERQSPNVFRMRLMGAEVIPVHSGSATLKDACNEALRDWSGSYEKAHYMLGTAAGPHPFPTIVREFQRMIGEETKAQILEKEGRLPDAVIACVGGGSNAIGMFADFIDETNVGLIGVEPAGHGIESGEHGAPLKHGRVGIYFGMKSPMMQTADGQIEESYSISAGLDFPSVGPQHAFLNSTGRADYVSITDDEALDAFKALSRHEGIIPALESSHALAHALKMMRENPEKEQLLVVNLSGRGDKDIFTVHDILKARGEI.

An N6-(pyridoxal phosphate)lysine modification is found at Lys-87.

The protein belongs to the TrpB family. In terms of assembly, tetramer of two alpha and two beta chains. The cofactor is pyridoxal 5'-phosphate.

The enzyme catalyses (1S,2R)-1-C-(indol-3-yl)glycerol 3-phosphate + L-serine = D-glyceraldehyde 3-phosphate + L-tryptophan + H2O. The protein operates within amino-acid biosynthesis; L-tryptophan biosynthesis; L-tryptophan from chorismate: step 5/5. Functionally, the beta subunit is responsible for the synthesis of L-tryptophan from indole and L-serine. The sequence is that of Tryptophan synthase beta chain from Klebsiella pneumoniae (strain 342).